A 787-amino-acid polypeptide reads, in one-letter code: Glycine-rich domain-containing protein 2 (787 aa).

As to expression, expressed in leaves, inflorescences, buds, flowers and immature siliques.

Functionally, involved in development and stress responses, probably through an auxin-dependent mechanism. This Arabidopsis thaliana (Mouse-ear cress) protein is Glycine-rich domain-containing protein 2.